A 464-amino-acid polypeptide reads, in one-letter code: MSSRSTKDLIKSKWGSKPSNSKSETTLEKLKGEIAHLKTSVDEITSGKGKLTDKERHRLLEKIRVLEAEKEKNAYQLTEKDKEIQRLRDQLKARYSTTTLLEQLEETTREGERREQVLKALSEEKDVLKQQLSAATSRIAELESKTNTLRLSQTVAPNCFNSSINNIHEMEIQLKDALEKNQQWLVYDQQREVYVKGLLAKIFELEKKTETAAHSLPQQTKKPESEGYLQEEKQKCYNDLLASAKKDLEVERQTITQLSFELSEFRRKYEETQKEVHNLNQLLYSQRRADVQHLEDDRHKTEKIQKLREENDIARGKLEEEKKRSEELLSQVQFLYTSLLKQQEEQTRVALLEQQMQACTLDFENEKLDRQHVQHQLHVILKELRKARNQITQLESLKQLHEFAITEPLVTFQGETENREKVAASPKSPTAALNESLVECPKCNIQYPATEHRDLLVHVEYCSK.

Residues 1-11 show a composition bias toward basic and acidic residues; sequence MSSRSTKDLIK. A disordered region spans residues 1–26; it reads MSSRSTKDLIKSKWGSKPSNSKSETT. Coiled coils occupy residues 22 to 186, 238 to 337, and 374 to 403; these read KSET…QWLV, NDLL…FLYT, and QHQL…LHEF. Serine 96 is modified (phosphoserine). Residues 157 to 236 form an interaction with TSG101 region; sequence PNCFNSSINN…GYLQEEKQKC (80 aa). Residues 160–214 are interaction with PDCD6IP; it reads FNSSINNIHEMEIQLKDALEKNQQWLVYDQQREVYVKGLLAKIFELEKKTETAAH. The required for localization to the interphase centrosome and to the midbody during cytokinesis stretch occupies residues 355-464; that stretch reads QMQACTLDFE…LLVHVEYCSK (110 aa). 2 positions are modified to phosphoserine; by CDK1 and MAPK1: serine 425 and serine 428. At threonine 430 the chain carries Phosphothreonine. The residue at position 436 (serine 436) is a Phosphoserine; by PLK1.

As to quaternary structure, homodimer. Interacts (phosphorylated on Ser-425 and Ser-428) with PLK1; the interaction is indirect via the MTMR3:MTMR4 heterooligomer, occurs during early mitosis, regulates the phosphorylation of CEP55 by PLK1 and its recruitment to the midbody where it can mediate cell abscission. Interacts with AKAP9/CG-NAP; the interaction occurs in interphase and is lost upon mitotic entry. Interacts with PCNT/Kendrin; the interaction occurs in interphase and is lost upon mitotic entry. Directly interacts with PDCD6IP; this interaction is required for PDCD6IP targeting to the midbody; CEP55 binds PDCD6IP in a 2:1 stoichiometry; PDCD6IP competes with TSG101 for the same binding site. Interacts with TSG101; TSG101 competes with PDCD6IP for the same binding site; interaction is required for cytokinesis but not for viral budding. Interacts with MVB12A, VPS37B, VPS37C and VPS28. There is a hierachy of phosphorylation, where both Ser-425 and Ser-428 are phosphorylated at the onset of mitosis, prior to Ser-436. Phosphorylation at Ser-425 and Ser-428 is required for dissociation from the centrosome at the G2/M boundary. Phosphorylation at the 3 sites, Ser-425, Ser-428 and Ser-436, is required for protein function at the final stages of cell division to complete cytokinesis successfully. Expressed in embryonic brain. Expressed in fetal brain ganglionic eminence, kidney tubules and multinucleate neurons in the temporal cortex. Expressed in adult brain, cerebellum, kidney tubules, intestine and muscles (at protein level). Widely expressed, mostly in proliferative tissues. Highly expressed in testis. Intermediate levels in adult and fetal thymus, as well as in various cancer cell lines. Low levels in different parts of the digestive tract, bone marrow, lymph nodes, placenta, fetal heart and fetal spleen. Hardly detected in brain.

The protein resides in the cytoplasm. Its subcellular location is the cytoskeleton. The protein localises to the microtubule organizing center. It localises to the centrosome. It is found in the centriole. The protein resides in the cleavage furrow. Its subcellular location is the midbody. The protein localises to the midbody ring. In terms of biological role, plays a role in mitotic exit and cytokinesis. Recruits PDCD6IP and TSG101 to midbody during cytokinesis. Required for successful completion of cytokinesis. Not required for microtubule nucleation. Plays a role in the development of the brain and kidney. The polypeptide is Centrosomal protein of 55 kDa (Homo sapiens (Human)).